A 344-amino-acid chain; its full sequence is Short chain dehydrogenase/reductase mfmJ (344 aa).

Residues Leu51, Lys76, Asp99, Asn126, Tyr213, and Lys217 each coordinate NADP(+). Residue Tyr213 is the Proton donor of the active site. Residue Lys217 is the Lowers pKa of active site Tyr of the active site.

The protein belongs to the short-chain dehydrogenases/reductases (SDR) family.

In terms of biological role, short chain dehydrogenase/reductase; part of the gene cluster that mediates the biosynthesis of the phthalide-terpenoid hybrid 11'-O-desmethylfendlerol. MfmJ seems not to be involved directly in the biosynthesis of 11'-O-desmethylfendlerol and its role has still to be determined. The biosynthesis of 11'-O-desmethylfendlerol begins with the NR-PKS mfmB that forms 3,5-dimethylorsellinic acid (DMOA), which is then transformed into the phthalide 5,7-dihydroxy-4-(hydroxymethyl)-6-methylphthalide by the cytochrome P450 monooxygenase mfmA and the hydrolase mfmC. Subsequently, the methyltransferase mfmE catalyzes 7-O-methylation to yield 5-hydroxy-4-(hydroxymethyl)-7-methoxy-6-methylphthalide, which undergoes C-3 hydroxylation by the cytochrome P450 monooxygenase mfmF. The resultant cyclopolic acid (2,5-dihydroxy-4-(hydroxymethyl)-7-methoxy-6-methylphthalide) is then farnesylated by the DMATS-type prenyltransferase mfmD to afford 5-O-farnesylcyclopolic acid. Finally, the Pyr4-family terpene cyclase mfmH cyclizes the farnesyl moiety of 5-O-farnesylcyclopolic acid into a drimane-like structure, thus completing the biosynthesis of 11'-O-desmethylfendlerol. This chain is Short chain dehydrogenase/reductase mfmJ, found in Annulohypoxylon moriforme (Filamentous fungus).